Reading from the N-terminus, the 608-residue chain is Glutamine--fructose-6-phosphate aminotransferase [isomerizing] (608 aa).

The Nucleophile; for GATase activity role is filled by Cys2. Residues Cys2–Ala217 form the Glutamine amidotransferase type-2 domain. 2 SIS domains span residues Leu284–Lys423 and Leu456–Pro598. Lys603 (for Fru-6P isomerization activity) is an active-site residue.

It localises to the cytoplasm. The enzyme catalyses D-fructose 6-phosphate + L-glutamine = D-glucosamine 6-phosphate + L-glutamate. Functionally, involved in the production of the root hair deformation (HAD) factor specifically on soybean. The sequence is that of Glutamine--fructose-6-phosphate aminotransferase [isomerizing] (nodM) from Bradyrhizobium diazoefficiens (strain JCM 10833 / BCRC 13528 / IAM 13628 / NBRC 14792 / USDA 110).